We begin with the raw amino-acid sequence, 264 residues long: Small ribosomal subunit protein eS1 (264 aa).

Residues 236-255 (GEGGSGKRGEAGDKSERPEG) are compositionally biased toward basic and acidic residues. The tract at residues 236–264 (GEGGSGKRGEAGDKSERPEGYEPPVQESV) is disordered.

The protein belongs to the eukaryotic ribosomal protein eS1 family. Component of the small ribosomal subunit. Mature ribosomes consist of a small (40S) and a large (60S) subunit. The 40S subunit contains about 33 different proteins and 1 molecule of RNA (18S). The 60S subunit contains about 49 different proteins and 3 molecules of RNA (28S, 5.8S and 5S).

It is found in the cytoplasm. This Spodoptera frugiperda (Fall armyworm) protein is Small ribosomal subunit protein eS1.